The following is a 257-amino-acid chain: UPF0246 protein CPS_4102 (257 aa).

Belongs to the UPF0246 family.

This chain is UPF0246 protein CPS_4102, found in Colwellia psychrerythraea (strain 34H / ATCC BAA-681) (Vibrio psychroerythus).